Reading from the N-terminus, the 214-residue chain is MRVKHKPWAKDRLEEFPAIYIKNPEDFKGRWQEVFGNNNPIHIEIGSGKGQFISGMAKANPEINYIGIEMIESVLVSALDKAIEAEVPNLRLVARDAKLLEESFEKGEIAQIYLNFSDPWPKKRHTKRRLTNPTFLTIYERLLPKAGEIHFKTDNRSLFEYSLVAFSEYNMLLTFVSLDLHNSDYEGNIKTEYEEKFSAKGFPIYRLEAKFDRD.

S-adenosyl-L-methionine is bound by residues Glu44, Glu69, Asp96, and Asp118. Asp118 is an active-site residue. Substrate contacts are provided by residues Lys122, Asp154, and 191 to 194 (TEYE).

It belongs to the class I-like SAM-binding methyltransferase superfamily. TrmB family.

It catalyses the reaction guanosine(46) in tRNA + S-adenosyl-L-methionine = N(7)-methylguanosine(46) in tRNA + S-adenosyl-L-homocysteine. The protein operates within tRNA modification; N(7)-methylguanine-tRNA biosynthesis. Its function is as follows. Catalyzes the formation of N(7)-methylguanine at position 46 (m7G46) in tRNA. The protein is tRNA (guanine-N(7)-)-methyltransferase of Listeria innocua serovar 6a (strain ATCC BAA-680 / CLIP 11262).